The sequence spans 274 residues: NH(3)-dependent NAD(+) synthetase (274 aa).

ATP is bound at residue 46–53 (GISGGQDS). Position 52 (D52) interacts with Mg(2+). R140 contacts deamido-NAD(+). T160 provides a ligand contact to ATP. E165 contributes to the Mg(2+) binding site. 2 residues coordinate deamido-NAD(+): K173 and D180. ATP-binding residues include K189 and T211. 260-261 (HK) provides a ligand contact to deamido-NAD(+).

It belongs to the NAD synthetase family. In terms of assembly, homodimer.

It carries out the reaction deamido-NAD(+) + NH4(+) + ATP = AMP + diphosphate + NAD(+) + H(+). It functions in the pathway cofactor biosynthesis; NAD(+) biosynthesis; NAD(+) from deamido-NAD(+) (ammonia route): step 1/1. Catalyzes the ATP-dependent amidation of deamido-NAD to form NAD. Uses ammonia as a nitrogen source. The sequence is that of NH(3)-dependent NAD(+) synthetase from Streptococcus equi subsp. zooepidemicus (strain MGCS10565).